A 119-amino-acid polypeptide reads, in one-letter code: Ribosome-binding factor A (119 aa).

It belongs to the RbfA family. In terms of assembly, monomer. Binds 30S ribosomal subunits, but not 50S ribosomal subunits or 70S ribosomes.

Its subcellular location is the cytoplasm. Functionally, one of several proteins that assist in the late maturation steps of the functional core of the 30S ribosomal subunit. Associates with free 30S ribosomal subunits (but not with 30S subunits that are part of 70S ribosomes or polysomes). Required for efficient processing of 16S rRNA. May interact with the 5'-terminal helix region of 16S rRNA. The chain is Ribosome-binding factor A from Coxiella burnetii (strain CbuG_Q212) (Coxiella burnetii (strain Q212)).